The following is a 174-amino-acid chain: MAYHLLQRNRNGGLNLAKALNEAMTHIGHCNACRTFTEEEECTICKNPRRQISGQLCIVEMPEDIQAIEQTGQFSGRYFVLMGHLSPLDGIGPREIGLDLLQQRLEQESFHEIILATNPTIEGDATANYIAEICHLYNVKVTRIAHGIPVGGSLEMVDGTTLSHSFAGRRDFLL.

The segment at Cys-30 to Cys-45 adopts a C4-type zinc-finger fold. Positions Gly-54 to Pro-149 constitute a Toprim domain.

The protein belongs to the RecR family.

May play a role in DNA repair. It seems to be involved in an RecBC-independent recombinational process of DNA repair. It may act with RecF and RecO. The sequence is that of Recombination protein RecR from Haemophilus ducreyi (strain 35000HP / ATCC 700724).